The following is a 1048-amino-acid chain: Putative cation efflux system protein SilA (1048 aa).

The next 14 helical transmembrane spans lie at 14–34, 125–145, 338–358, 363–383, 391–411, 446–466, 485–505, 539–559, 737–757, 871–891, 897–917, 928–948, 985–1005, and 1012–1032; these read FLVMMGALFLSIWGTWTIINT, VSSEIGPDATGVGWIFEYALV, LSSKLLEEFFVVAIVCALFLW, ALVAIISLPLGLCIAFIVMHF, MSLGGIAIAVGAMVDAAIVMI, VGPALFISLLIITLSFIPIFT, SMAGAAALAIIVIPILMGFWI, TLLVAALSIFTVVWPLSQVGG, GMTVGDVQLFVSSAIGGAMVG, KLKLMVPMTVMIIFILLYLAF, ALLILMSLPFALVGGIWFLYW, TGFIALAGVAAEFGVVMLMYL, AMTVAVIIAGLLPILWGTGAG, and IAAPMIGGMITAPLLSLFIIP.

It belongs to the resistance-nodulation-cell division (RND) (TC 2.A.6) family.

The protein resides in the cell inner membrane. Functionally, component of the sil cation-efflux system that confers resistance to silver. May be part of a three-component cation/proton antiporter. In Salmonella typhimurium, this protein is Putative cation efflux system protein SilA (silA).